The chain runs to 65 residues: Large ribosomal subunit protein bL35 (65 aa).

The interval 1–29 is disordered; that stretch reads MPKMKTNRGAAKRFKKTGSGRIKRGKAFT. Residues 10–26 show a composition bias toward basic residues; that stretch reads AAKRFKKTGSGRIKRGK.

It belongs to the bacterial ribosomal protein bL35 family.

In Desulfotalea psychrophila (strain LSv54 / DSM 12343), this protein is Large ribosomal subunit protein bL35.